We begin with the raw amino-acid sequence, 269 residues long: MNKRLRDAVKKGNLFIPFITAGDPVREATIALALSLQRSGADVLELGIPYSDPLADGPVIQNASKRALAGGMTLAKAMALVPEMRKEGLTIPVIVFTYANPLLQFGFERFCETACDYGIDGLLVPDLPFEESETLANECEKQGLALISLVAPTSQQRIKAIASRAQGFLYCVSSLGVTGARKTLHPQVEAFLKLVKEASPVPFVVGFGISSYEQVEEMGRHADGVVIGSAIVEQIGLRCEALKQAESRDEAVKEIEQYVNSLLHPAPTY.

Catalysis depends on proton acceptor residues glutamate 45 and aspartate 56.

This sequence belongs to the TrpA family. In terms of assembly, tetramer of two alpha and two beta chains.

The enzyme catalyses (1S,2R)-1-C-(indol-3-yl)glycerol 3-phosphate + L-serine = D-glyceraldehyde 3-phosphate + L-tryptophan + H2O. Its pathway is amino-acid biosynthesis; L-tryptophan biosynthesis; L-tryptophan from chorismate: step 5/5. Functionally, the alpha subunit is responsible for the aldol cleavage of indoleglycerol phosphate to indole and glyceraldehyde 3-phosphate. In Shouchella clausii (strain KSM-K16) (Alkalihalobacillus clausii), this protein is Tryptophan synthase alpha chain.